The sequence spans 211 residues: Endo-1,4-beta-xylanase 3 (211 aa).

The N-terminal stretch at 1–27 (MKVTAAFAGLLVTAFAAPVPEPVLVSR) is a signal peptide. Residues 28–210 (SAGINYVQNY…GAGSASVTIS (183 aa)) enclose the GH11 domain. Catalysis depends on E106, which acts as the Nucleophile. A disulfide bridge connects residues C119 and C138. E197 functions as the Proton donor in the catalytic mechanism.

This sequence belongs to the glycosyl hydrolase 11 (cellulase G) family.

It is found in the secreted. The enzyme catalyses Endohydrolysis of (1-&gt;4)-beta-D-xylosidic linkages in xylans.. The protein operates within glycan degradation; xylan degradation. The chain is Endo-1,4-beta-xylanase 3 (xynC) from Aspergillus kawachii (strain NBRC 4308) (White koji mold).